The primary structure comprises 148 residues: DNA-directed RNA polymerase II subunit GRINL1A, isoforms 4/5 (148 aa).

The interval 1-66 (MATPARAPES…AEFGGAAGNV (66 aa)) is disordered. Residues 53 to 66 (GLGAAEFGGAAGNV) show a composition bias toward low complexity.

The polypeptide is DNA-directed RNA polymerase II subunit GRINL1A, isoforms 4/5 (POLR2M) (Homo sapiens (Human)).